A 329-amino-acid chain; its full sequence is Malate dehydrogenase (329 aa).

An NAD(+)-binding site is contributed by 12 to 18; it reads GAAGQIG. Substrate contacts are provided by Arg-93 and Arg-99. NAD(+) is bound by residues Asn-106, Gln-113, and 130 to 132; that span reads TGN. Positions 132 and 163 each coordinate substrate. His-188 serves as the catalytic Proton acceptor.

Belongs to the LDH/MDH superfamily. MDH type 2 family.

It carries out the reaction (S)-malate + NAD(+) = oxaloacetate + NADH + H(+). Its function is as follows. Catalyzes the reversible oxidation of malate to oxaloacetate. The protein is Malate dehydrogenase of Mycobacterium bovis (strain ATCC BAA-935 / AF2122/97).